The following is a 323-amino-acid chain: Ribokinase (323 aa).

Substrate is bound by residues 26 to 28, 54 to 58, and glutamate 155; these read MTD and GKGAN. Residues asparagine 200, 236–241, and threonine 257 each bind ATP; that span reads TLGASG. Aspartate 264 and threonine 266 together coordinate K(+). ATP-binding positions include 269-270 and asparagine 296; that span reads GD. Aspartate 270 contacts substrate. Residue aspartate 270 is the Proton acceptor of the active site. Residues serine 302, alanine 305, glycine 307, and serine 311 each contribute to the K(+) site.

The protein belongs to the carbohydrate kinase PfkB family. Ribokinase subfamily. As to quaternary structure, homodimer. Mg(2+) serves as cofactor.

The protein resides in the cytoplasm. It is found in the nucleus. It carries out the reaction D-ribose + ATP = D-ribose 5-phosphate + ADP + H(+). Its pathway is carbohydrate metabolism; D-ribose degradation; D-ribose 5-phosphate from beta-D-ribopyranose: step 2/2. Its activity is regulated as follows. Activated by a monovalent cation that binds near, but not in, the active site. The most likely occupant of the site in vivo is potassium. Ion binding induces a conformational change that may alter substrate affinity. Competitively inhibited by phosphonoacetic acid, etidronate, 2-carboxethylphosphonic acid, N-(phosphonomethyl)glycine, N-(phosphonomethyl)iminodiacetic acid and clodronate. Its function is as follows. Catalyzes the phosphorylation of ribose at O-5 in a reaction requiring ATP and magnesium. The resulting D-ribose-5-phosphate can then be used either for sythesis of nucleotides, histidine, and tryptophan, or as a component of the pentose phosphate pathway. This is Ribokinase from Mus musculus (Mouse).